The chain runs to 240 residues: Small ribosomal subunit protein uS3 (240 aa).

Residues Leu21 to Gln92 enclose the KH type-2 domain. Thr44 and Thr70 each carry phosphothreonine. Ser97 is modified (phosphoserine). A Glycyl lysine isopeptide (Lys-Gly) (interchain with G-Cter in ubiquitin) cross-link involves residue Lys106. Ser129 carries the phosphoserine modification. Residues Lys132 and Lys141 each participate in a glycyl lysine isopeptide (Lys-Gly) (interchain with G-Cter in ubiquitin) cross-link. The residue at position 146 (Arg146) is an Omega-N-methylarginine; by SFM1. Glycyl lysine isopeptide (Lys-Gly) (interchain with G-Cter in ubiquitin) cross-links involve residues Lys151, Lys200, and Lys212. Residues Lys212–Ala240 are disordered. Residue Ser221 is modified to Phosphoserine. Positions Glu230 to Ala240 are enriched in acidic residues. A Phosphothreonine modification is found at Thr231.

The protein belongs to the universal ribosomal protein uS3 family. Component of the small ribosomal subunit (SSU). Mature yeast ribosomes consist of a small (40S) and a large (60S) subunit. The 40S small subunit contains 1 molecule of ribosomal RNA (18S rRNA) and 33 different proteins (encoded by 57 genes). The large 60S subunit contains 3 rRNA molecules (25S, 5.8S and 5S rRNA) and 46 different proteins (encoded by 81 genes). In terms of processing, ubiquitinated at Lys-212 in response to stalled ribosomes. Ubiquitination leads to activation of the No-Go Decay (NGD) pathway and degradation of non-functional 18S rRNA: first monoubiquitinated at Lys-212 by MAG2, followed by formation of 'Lys-63'-linked polyubiquitin chains on monoubiquitin by HEL2 and RSP5.

It is found in the cytoplasm. Component of the ribosome, a large ribonucleoprotein complex responsible for the synthesis of proteins in the cell. The small ribosomal subunit (SSU) binds messenger RNAs (mRNAs) and translates the encoded message by selecting cognate aminoacyl-transfer RNA (tRNA) molecules. The large subunit (LSU) contains the ribosomal catalytic site termed the peptidyl transferase center (PTC), which catalyzes the formation of peptide bonds, thereby polymerizing the amino acids delivered by tRNAs into a polypeptide chain. The nascent polypeptides leave the ribosome through a tunnel in the LSU and interact with protein factors that function in enzymatic processing, targeting, and the membrane insertion of nascent chains at the exit of the ribosomal tunnel. This chain is Small ribosomal subunit protein uS3, found in Saccharomyces cerevisiae (strain ATCC 204508 / S288c) (Baker's yeast).